A 100-amino-acid polypeptide reads, in one-letter code: ATP-dependent Clp protease adapter protein ClpS (100 aa).

Belongs to the ClpS family. As to quaternary structure, binds to the N-terminal domain of the chaperone ClpA.

In terms of biological role, involved in the modulation of the specificity of the ClpAP-mediated ATP-dependent protein degradation. The polypeptide is ATP-dependent Clp protease adapter protein ClpS (Corynebacterium glutamicum (strain R)).